Reading from the N-terminus, the 259-residue chain is MPEPLVTVQSVSVTLGGNAVLSDVSLSLAPGRITTLIGPNGAGKSTLARLVLGLVQPDSNHGTVIRRKGLRVGYMPQHIKIDDSLPLTVDRFLWLAAPGPTASRRAALERAGVAHLRRRGVQQLSGGEMQRVLLARALLRKPDLLVLDEPAQGVDVAGQNALYGLLKTVRDELGCAILLISHDLHLVMAATDEVICLQRHVCCSGSPESVSRDPAYHELFGPGAGTPNLALYTHDHDHDHDLHGNATHSHDHNGPCNHD.

Residues 6-223 (VTVQSVSVTL…PAYHELFGPG (218 aa)) form the ABC transporter domain. 38–45 (GPNGAGKS) is a binding site for ATP. Residues 230 to 259 (ALYTHDHDHDHDLHGNATHSHDHNGPCNHD) are disordered. Residues 233-259 (THDHDHDHDLHGNATHSHDHNGPCNHD) are compositionally biased toward basic and acidic residues.

The protein belongs to the ABC transporter superfamily. Zinc importer (TC 3.A.1.15.5) family. As to quaternary structure, the complex is composed of two ATP-binding proteins (ZnuC), two transmembrane proteins (ZnuB) and a solute-binding protein (ZnuA).

The protein localises to the cell inner membrane. It carries out the reaction Zn(2+)(out) + ATP(in) + H2O(in) = Zn(2+)(in) + ADP(in) + phosphate(in) + H(+)(in). Its function is as follows. Part of the ABC transporter complex ZnuABC involved in zinc import. Responsible for energy coupling to the transport system. The sequence is that of Zinc import ATP-binding protein ZnuC from Alcanivorax borkumensis (strain ATCC 700651 / DSM 11573 / NCIMB 13689 / SK2).